A 326-amino-acid polypeptide reads, in one-letter code: Nitrogen metabolite regulation-like protein bik4 (326 aa).

NADP(+) is bound by residues 13-18 (GATGEV) and 161-164 (FASN).

It belongs to the NmrA-type oxidoreductase family.

Its function is as follows. Nitrogen metabolite regulation-like protein involved in the regulation of the gene cluster that mediates the biosynthesis of bikaverin, a red pigment also considered as a mycotoxin. The protein is Nitrogen metabolite regulation-like protein bik4 of Gibberella fujikuroi (strain CBS 195.34 / IMI 58289 / NRRL A-6831) (Bakanae and foot rot disease fungus).